We begin with the raw amino-acid sequence, 390 residues long: Serpin B3 (390 aa).

Met1 is modified (N-acetylmethionine).

The protein belongs to the serpin family. Ov-serpin subfamily. As to quaternary structure, interacts with MAPK8/JNK1. Squamous cells. Expressed in some hepatocellular carcinoma (at protein level).

It is found in the cytoplasm. Its function is as follows. May act as a papain-like cysteine protease inhibitor to modulate the host immune response against tumor cells. Also functions as an inhibitor of UV-induced apoptosis via suppression of the activity of c-Jun NH(2)-terminal kinase (JNK1). This Homo sapiens (Human) protein is Serpin B3 (SERPINB3).